The sequence spans 383 residues: tRNA (guanine(26)-N(2))-dimethyltransferase (383 aa).

One can recognise a Trm1 methyltransferase domain in the interval 4 to 371 (EIITEGRTPL…ASPEEFEAVL (368 aa)). S-adenosyl-L-methionine contacts are provided by R38, R63, D80, D108, and A109. Residues C243, C246, C258, and C261 each contribute to the Zn(2+) site.

The protein belongs to the class I-like SAM-binding methyltransferase superfamily. Trm1 family.

The catalysed reaction is guanosine(26) in tRNA + 2 S-adenosyl-L-methionine = N(2)-dimethylguanosine(26) in tRNA + 2 S-adenosyl-L-homocysteine + 2 H(+). In terms of biological role, dimethylates a single guanine residue at position 26 of a number of tRNAs using S-adenosyl-L-methionine as donor of the methyl groups. In Methanopyrus kandleri (strain AV19 / DSM 6324 / JCM 9639 / NBRC 100938), this protein is tRNA (guanine(26)-N(2))-dimethyltransferase.